The chain runs to 476 residues: MSVITRFAPSPTGFLHIGGARTALFNWLYAKHHGGKMLLRIEDTDRERSTDAAVKAIINGLHWIGLSYDGDPISQFERTERHREVAEQLVKDGKAYYCYASPEELAEMRESARAEGRPPHYDGHWRDRDISEAPKGIKPVIRIKAPKEGATIVRDRVQGDVLFPNKDLDDFIILRSDGTPTYMLAVVVDDHDMGITHIIRGDDHLTNAARQTIIFNAMGWKIPVMAHIPLIHGEDGAKLSKRHGALGVDAYRAMGYLPAALRNYLVRLGWSHGNDEIISTEDMISWFDIDDINKGAARLDFKKLNAINGHYIRMSTDQDLFDSTLSILPEIESGLEIIDKLDKKHRAQFLAAIPHIKERSKTLLELIDGASFIFTKQPLLLDEKAKMLLNEDGQAILKSIYPILESCSYWDTNTLDEALRHYAQKQELKFGTIAQPLRAALTGRATSPGVFDVLVLLGRNESLNRINQQINTTKCS.

The short motif at 9–19 (PSPTGFLHIGG) is the 'HIGH' region element. The 'KMSKS' region motif lies at 238–242 (KLSKR). Lysine 241 lines the ATP pocket.

It belongs to the class-I aminoacyl-tRNA synthetase family. Glutamate--tRNA ligase type 1 subfamily. As to quaternary structure, monomer.

The protein localises to the cytoplasm. The enzyme catalyses tRNA(Glu) + L-glutamate + ATP = L-glutamyl-tRNA(Glu) + AMP + diphosphate. In terms of biological role, catalyzes the attachment of glutamate to tRNA(Glu) in a two-step reaction: glutamate is first activated by ATP to form Glu-AMP and then transferred to the acceptor end of tRNA(Glu). In Bartonella bacilliformis (strain ATCC 35685 / KC583 / Herrer 020/F12,63), this protein is Glutamate--tRNA ligase 1.